The chain runs to 891 residues: Alanine--tRNA ligase (891 aa).

Zn(2+) is bound by residues His576, His580, Cys684, and His688.

It belongs to the class-II aminoacyl-tRNA synthetase family. Requires Zn(2+) as cofactor.

Its subcellular location is the cytoplasm. It catalyses the reaction tRNA(Ala) + L-alanine + ATP = L-alanyl-tRNA(Ala) + AMP + diphosphate. Catalyzes the attachment of alanine to tRNA(Ala) in a two-step reaction: alanine is first activated by ATP to form Ala-AMP and then transferred to the acceptor end of tRNA(Ala). Also edits incorrectly charged Ser-tRNA(Ala) and Gly-tRNA(Ala) via its editing domain. The protein is Alanine--tRNA ligase of Orientia tsutsugamushi (strain Boryong) (Rickettsia tsutsugamushi).